A 760-amino-acid polypeptide reads, in one-letter code: GLC7-interacting protein 4 (760 aa).

Disordered regions lie at residues 449-573 (KKKP…SLQS) and 593-626 (KSAS…SSST). Low complexity-rich tracts occupy residues 454–474 (ITKL…ASPS) and 494–506 (SSRS…VRTT). 2 positions are modified to phosphoserine: serine 497 and serine 501. Residues 512-525 (AETKKSVVSPEKRK) are compositionally biased toward basic and acidic residues. Residues 534–554 (SSSLQSYTNKQQTSYLNSTRH) show a composition bias toward polar residues. 2 stretches are compositionally biased toward low complexity: residues 561–573 (SKLN…SLQS) and 594–626 (SAST…SSST). Residue serine 609 is modified to Phosphoserine.

The protein belongs to the GIP4 family. As to quaternary structure, interacts with GLC7.

Its subcellular location is the cytoplasm. Its function is as follows. GLC7 phosphatase-regulatory protein involved in GLC7 subcellular redistribution and chromosome segregation. This Saccharomyces cerevisiae (strain ATCC 204508 / S288c) (Baker's yeast) protein is GLC7-interacting protein 4 (GIP4).